Here is a 384-residue protein sequence, read N- to C-terminus: Probable intron-encoded endonuclease Cox1-I1b (384 aa).

It belongs to the LAGLIDADG endonuclease family.

It is found in the mitochondrion. Its function is as follows. Probable mitochondrial DNA endonuclease involved in intron homing. The sequence is that of Probable intron-encoded endonuclease Cox1-I1b (cox1-I1b) from Schizosaccharomyces pombe (strain 972 / ATCC 24843) (Fission yeast).